The following is a 354-amino-acid chain: Glycerol-1-phosphate dehydrogenase [NAD(P)+] (354 aa).

NAD(+) is bound by residues Gly-103–Asp-107 and Thr-125–Ser-128. Asp-130 provides a ligand contact to substrate. Ser-134 serves as a coordination point for NAD(+). A substrate-binding site is contributed by Asp-176. The Zn(2+) site is built by Asp-176 and His-255. Substrate is bound at residue His-259. A Zn(2+)-binding site is contributed by His-271.

Belongs to the glycerol-1-phosphate dehydrogenase family. In terms of assembly, homodimer. Zn(2+) is required as a cofactor.

The protein resides in the cytoplasm. The enzyme catalyses sn-glycerol 1-phosphate + NAD(+) = dihydroxyacetone phosphate + NADH + H(+). The catalysed reaction is sn-glycerol 1-phosphate + NADP(+) = dihydroxyacetone phosphate + NADPH + H(+). The protein operates within membrane lipid metabolism; glycerophospholipid metabolism. Catalyzes the NAD(P)H-dependent reduction of dihydroxyacetonephosphate (DHAP or glycerone phosphate) to glycerol 1-phosphate (G1P). The G1P thus generated is used as the glycerophosphate backbone of phospholipids in the cellular membranes of Archaea. The polypeptide is Glycerol-1-phosphate dehydrogenase [NAD(P)+] (Nitrosopumilus maritimus (strain SCM1)).